The sequence spans 122 residues: Ribonuclease P protein component (122 aa).

Belongs to the RnpA family. In terms of assembly, consists of a catalytic RNA component (M1 or rnpB) and a protein subunit.

It catalyses the reaction Endonucleolytic cleavage of RNA, removing 5'-extranucleotides from tRNA precursor.. RNaseP catalyzes the removal of the 5'-leader sequence from pre-tRNA to produce the mature 5'-terminus. It can also cleave other RNA substrates such as 4.5S RNA. The protein component plays an auxiliary but essential role in vivo by binding to the 5'-leader sequence and broadening the substrate specificity of the ribozyme. This chain is Ribonuclease P protein component, found in Lactobacillus johnsonii (strain CNCM I-12250 / La1 / NCC 533).